Here is a 176-residue protein sequence, read N- to C-terminus: Probable DNA-directed RNA polymerase subunit delta (176 aa).

In terms of domain architecture, HTH HARE-type spans Cys14–Trp81. Positions Ile91–Leu176 are disordered. Residues Asp106–Leu176 are compositionally biased toward acidic residues.

It belongs to the RpoE family. As to quaternary structure, RNAP is composed of a core of 2 alpha, a beta and a beta' subunits. The core is associated with a delta subunit and one of several sigma factors.

In terms of biological role, participates in both the initiation and recycling phases of transcription. In the presence of the delta subunit, RNAP displays an increased specificity of transcription, a decreased affinity for nucleic acids, and an increased efficiency of RNA synthesis because of enhanced recycling. The protein is Probable DNA-directed RNA polymerase subunit delta of Bacillus thuringiensis (strain Al Hakam).